Consider the following 283-residue polypeptide: Agmatinase (283 aa).

A divalent metal cation is bound by residues H112, D131, H133, D135, D211, and D213.

It belongs to the arginase family. Agmatinase subfamily. As to quaternary structure, homotetramer. It depends on a divalent metal cation as a cofactor.

It catalyses the reaction agmatine + H2O = urea + putrescine. The protein operates within amine and polyamine biosynthesis; putrescine biosynthesis via agmatine pathway; putrescine from agmatine: step 1/1. Inhibited by putrescine. Activity is not affected by arginine and ornithine. Its function is as follows. Catalyzes the formation of putrescine from agmatine. Cannot use arginine. This chain is Agmatinase, found in Pyrococcus horikoshii (strain ATCC 700860 / DSM 12428 / JCM 9974 / NBRC 100139 / OT-3).